We begin with the raw amino-acid sequence, 451 residues long: MASHAALAPSRIPASTRLASKASQQYSFLTQCSFKRLDVADFSGLRSSNSVTFTREASFHDVIAAQLTTKPTGAAPVRGETVAKLKVAINGFGRIGRNFLRCWHGRKDSPLDVVVVNDSGGVKSATHLLKYDSILGTFKADVKIIDNETFSIDGKPIKVVSNRDPLKLPWAELGIDIVIEGTGVFVDGPGAGKHIQAGAKKVIITAPAKGSDIPTYVVGVNEKDYGHDVANIISNASCTTNCLAPFVKVLDEELGIVKGTMTTTHSYTGDQRLLDASHRDLRRARAAALNIVPTSTGAAKAVSLVLPQLKGKLNGIALRVPTPNVSVVDLVVNIEKVGVTAEDVNNAFRKAAAGPLKGVLDVCDIPLVSVDFRCSDFSSTIDSSLTMVMGGDMVKVVAWYDNEWGYSQRVVDLADLVANKWPGLEGSVASGDPLEDFCKDNPADEECKLYE.

The transit peptide at 1–83 directs the protein to the chloroplast; that stretch reads MASHAALAPS…AAPVRGETVA (83 aa). Residues 94-95, D118, and R163 contribute to the NADP(+) site; that span reads RI. Residues 237–239, T268, R283, 296–297, and R319 each bind D-glyceraldehyde 3-phosphate; these read SCT and TG. Catalysis depends on C238, which acts as the Nucleophile. Residue N402 coordinates NADP(+).

This sequence belongs to the glyceraldehyde-3-phosphate dehydrogenase family. Tetramer of either four A chains (GAPDH 2) or two A and two B chains (GAPDH 1).

Its subcellular location is the plastid. The protein localises to the chloroplast. It carries out the reaction D-glyceraldehyde 3-phosphate + phosphate + NADP(+) = (2R)-3-phospho-glyceroyl phosphate + NADPH + H(+). It participates in carbohydrate biosynthesis; Calvin cycle. The sequence is that of Glyceraldehyde-3-phosphate dehydrogenase B, chloroplastic (GAPB) from Spinacia oleracea (Spinach).